The sequence spans 398 residues: CCA-adding enzyme (398 aa).

Residues glycine 32 and arginine 35 each coordinate ATP. Residues glycine 32 and arginine 35 each contribute to the CTP site. Residues aspartate 45 and aspartate 47 each contribute to the Mg(2+) site. Residues arginine 119, aspartate 162, arginine 165, arginine 168, and arginine 171 each contribute to the ATP site. 5 residues coordinate CTP: arginine 119, aspartate 162, arginine 165, arginine 168, and arginine 171.

This sequence belongs to the tRNA nucleotidyltransferase/poly(A) polymerase family. Bacterial CCA-adding enzyme type 3 subfamily. Homodimer. Requires Mg(2+) as cofactor.

The enzyme catalyses a tRNA precursor + 2 CTP + ATP = a tRNA with a 3' CCA end + 3 diphosphate. It catalyses the reaction a tRNA with a 3' CCA end + 2 CTP + ATP = a tRNA with a 3' CCACCA end + 3 diphosphate. In terms of biological role, catalyzes the addition and repair of the essential 3'-terminal CCA sequence in tRNAs without using a nucleic acid template. Adds these three nucleotides in the order of C, C, and A to the tRNA nucleotide-73, using CTP and ATP as substrates and producing inorganic pyrophosphate. tRNA 3'-terminal CCA addition is required both for tRNA processing and repair. Also involved in tRNA surveillance by mediating tandem CCA addition to generate a CCACCA at the 3' terminus of unstable tRNAs. While stable tRNAs receive only 3'-terminal CCA, unstable tRNAs are marked with CCACCA and rapidly degraded. The protein is CCA-adding enzyme of Lactococcus lactis subsp. lactis (strain IL1403) (Streptococcus lactis).